The chain runs to 368 residues: 3-dehydroquinate synthase (368 aa).

Residues 69–74, 103–107, 127–128, Lys-140, and Lys-149 each bind NAD(+); these read DGEAYK, GVIGD, and TT. Positions 182, 245, and 262 each coordinate Zn(2+).

The protein belongs to the sugar phosphate cyclases superfamily. Dehydroquinate synthase family. Co(2+) serves as cofactor. Requires Zn(2+) as cofactor. The cofactor is NAD(+).

Its subcellular location is the cytoplasm. It catalyses the reaction 7-phospho-2-dehydro-3-deoxy-D-arabino-heptonate = 3-dehydroquinate + phosphate. It participates in metabolic intermediate biosynthesis; chorismate biosynthesis; chorismate from D-erythrose 4-phosphate and phosphoenolpyruvate: step 2/7. In terms of biological role, catalyzes the conversion of 3-deoxy-D-arabino-heptulosonate 7-phosphate (DAHP) to dehydroquinate (DHQ). The chain is 3-dehydroquinate synthase from Pseudomonas aeruginosa (strain LESB58).